A 431-amino-acid chain; its full sequence is Glutamate-1-semialdehyde 2,1-aminomutase 2 (431 aa).

K268 is modified (N6-(pyridoxal phosphate)lysine).

It belongs to the class-III pyridoxal-phosphate-dependent aminotransferase family. HemL subfamily. In terms of assembly, homodimer. The cofactor is pyridoxal 5'-phosphate.

It localises to the cytoplasm. The catalysed reaction is (S)-4-amino-5-oxopentanoate = 5-aminolevulinate. It participates in porphyrin-containing compound metabolism; protoporphyrin-IX biosynthesis; 5-aminolevulinate from L-glutamyl-tRNA(Glu): step 2/2. This chain is Glutamate-1-semialdehyde 2,1-aminomutase 2, found in Bacillus licheniformis (strain ATCC 14580 / DSM 13 / JCM 2505 / CCUG 7422 / NBRC 12200 / NCIMB 9375 / NCTC 10341 / NRRL NRS-1264 / Gibson 46).